A 370-amino-acid polypeptide reads, in one-letter code: NADH-quinone oxidoreductase subunit D (370 aa).

Belongs to the complex I 49 kDa subunit family. As to quaternary structure, NDH-1 is composed of 14 different subunits. Subunits NuoB, C, D, E, F, and G constitute the peripheral sector of the complex.

It is found in the cell membrane. The catalysed reaction is a quinone + NADH + 5 H(+)(in) = a quinol + NAD(+) + 4 H(+)(out). Its function is as follows. NDH-1 shuttles electrons from NADH, via FMN and iron-sulfur (Fe-S) centers, to quinones in the respiratory chain. The immediate electron acceptor for the enzyme in this species is believed to be a menaquinone. Couples the redox reaction to proton translocation (for every two electrons transferred, four hydrogen ions are translocated across the cytoplasmic membrane), and thus conserves the redox energy in a proton gradient. The protein is NADH-quinone oxidoreductase subunit D of Desulfitobacterium hafniense (strain Y51).